A 344-amino-acid polypeptide reads, in one-letter code: MSNAITMGIFWHLIGAASAACFYAPFKKVKKWSWETMWSVGGIVSWIILPWAISALLLPNFWAYYSSFSLSTLLPVFLFGAMWGIGNINYGLTMRYLGMSMGIGIAIGITLIVGTLMTPIINGNFDVLISTEGGRMTLLGVLVALIGVGIVTRAGQLKERKMGIKAEEFNLKKGLVLAVMCGIFSAGMSFAMNAAKPMHEAAAALGVDPLYVALPSYVVIMGGGAIINLGFCFIRLAKVKDLSLKADFSLAKSLIIHNVLLSTLGGLMWYLQFFFYAWGHAPIPAQYDYISWMLHMSFYVLCGGIVGLVLKEWNNAGRRPVTVLSLGCVVIIVAANIVGIGMAN.

The next 10 membrane-spanning stretches (helical) occupy residues 4–24 (AITM…CFYA), 38–58 (WSVG…ALLL), 68–88 (FSLS…IGNI), 101–121 (MGIG…TPII), 137–157 (TLLG…AGQL), 175–195 (LVLA…MNAA), 214–234 (LPSY…FCFI), 259–279 (VLLS…YAWG), 290–310 (ISWM…GLVL), and 323–343 (VLSL…IGMA).

It belongs to the L-rhamnose transporter (TC 2.A.7.6) family.

It is found in the cell inner membrane. It catalyses the reaction L-rhamnopyranose(in) + H(+)(in) = L-rhamnopyranose(out) + H(+)(out). Uptake of L-rhamnose across the cytoplasmic membrane with the concomitant transport of protons into the cell (symport system). The polypeptide is L-rhamnose-proton symporter (Escherichia coli (strain ATCC 8739 / DSM 1576 / NBRC 3972 / NCIMB 8545 / WDCM 00012 / Crooks)).